The primary structure comprises 446 residues: Histidinol dehydrogenase homolog (446 aa).

His-266 provides a ligand contact to Zn(2+). Active-site proton acceptor residues include Glu-334 and His-335. Residue His-427 coordinates Zn(2+).

This sequence belongs to the histidinol dehydrogenase family. It depends on Zn(2+) as a cofactor.

The sequence is that of Histidinol dehydrogenase homolog from Colwellia psychrerythraea (strain 34H / ATCC BAA-681) (Vibrio psychroerythus).